A 159-amino-acid chain; its full sequence is MADS-box transcription factor 23 (159 aa).

The MADS-box domain occupies 1-61 (MGRGKIEIKR…SRLYDFASSS (61 aa)). The region spanning 86 to 159 (AKLWQQEAAS…QELSRKVVTT (74 aa)) is the K-box domain.

In terms of tissue distribution, expressed in seedling roots and developing seeds.

Its subcellular location is the nucleus. Its function is as follows. Probable transcription factor. In Oryza sativa subsp. japonica (Rice), this protein is MADS-box transcription factor 23 (MADS23).